The primary structure comprises 65 residues: Muscarinic m1-toxin2 (65 aa).

4 cysteine pairs are disulfide-bonded: Cys-3/Cys-24, Cys-17/Cys-42, Cys-46/Cys-57, and Cys-58/Cys-63.

Belongs to the three-finger toxin family. Short-chain subfamily. Aminergic toxin sub-subfamily. As to quaternary structure, monomer. In terms of tissue distribution, expressed by the venom gland.

The protein resides in the secreted. Functionally, binds irreversibly and specifically to M1 (CHRM1) muscarinic acetylcholine receptors, blocking further binding of antagonists and preventing the action of agonists. The chain is Muscarinic m1-toxin2 from Dendroaspis angusticeps (Eastern green mamba).